We begin with the raw amino-acid sequence, 435 residues long: Xylose isomerase (435 aa).

2 residues coordinate Mg(2+): D306 and D308.

This sequence belongs to the xylose isomerase family. As to quaternary structure, homotetramer. Mg(2+) serves as cofactor.

It localises to the cytoplasm. The catalysed reaction is alpha-D-xylose = alpha-D-xylulofuranose. The polypeptide is Xylose isomerase (Allorhizobium ampelinum (strain ATCC BAA-846 / DSM 112012 / S4) (Agrobacterium vitis (strain S4))).